The sequence spans 1306 residues: DNA-directed RNA polymerase subunit beta' (1306 aa).

Cys-214, Cys-285, Cys-292, and Cys-295 together coordinate Zn(2+). Disordered regions lie at residues 1234-1263 and 1281-1306; these read LDNG…PNRL and IARA…DDDK. The segment covering 1247–1259 has biased composition (basic and acidic residues); sequence QGERDNNNSDKKP.

It belongs to the RNA polymerase beta' chain family. RpoC2 subfamily. In cyanobacteria the RNAP catalytic core is composed of 2 alpha, 1 beta, 1 beta', 1 gamma and 1 omega subunit. When a sigma factor is associated with the core the holoenzyme is formed, which can initiate transcription. Zn(2+) is required as a cofactor.

It carries out the reaction RNA(n) + a ribonucleoside 5'-triphosphate = RNA(n+1) + diphosphate. DNA-dependent RNA polymerase catalyzes the transcription of DNA into RNA using the four ribonucleoside triphosphates as substrates. The protein is DNA-directed RNA polymerase subunit beta' of Crocosphaera subtropica (strain ATCC 51142 / BH68) (Cyanothece sp. (strain ATCC 51142)).